The primary structure comprises 174 residues: Secreted protein A (174 aa).

The first 19 residues, 1–19, serve as a signal peptide directing secretion; the sequence is MRLLITLFAIFALFNCSLA. An N-linked (GlcNAc...) asparagine glycan is attached at N156.

Belongs to the Sct family. Post-translationally, probably contains disulfide bonds.

The protein resides in the secreted. It is found in the extracellular vesicle. This Dictyostelium discoideum (Social amoeba) protein is Secreted protein A (p17).